The primary structure comprises 82 residues: Putative membrane protein insertion efficiency factor (82 aa).

The protein belongs to the UPF0161 family.

It is found in the cell inner membrane. Its function is as follows. Could be involved in insertion of integral membrane proteins into the membrane. The polypeptide is Putative membrane protein insertion efficiency factor (Aeromonas salmonicida (strain A449)).